A 343-amino-acid polypeptide reads, in one-letter code: Serine/threonine-protein kinase SRK2C (343 aa).

Residues tyrosine 4–phenylalanine 260 form the Protein kinase domain. ATP is bound by residues isoleucine 10 to alanine 18 and lysine 33. Aspartate 123 (proton acceptor) is an active-site residue. Threonine 158 is modified (phosphothreonine).

This sequence belongs to the protein kinase superfamily. Ser/Thr protein kinase family. As to quaternary structure, interacts with I-2 and TOPP1. In terms of tissue distribution, expressed in seedlings.

It carries out the reaction L-seryl-[protein] + ATP = O-phospho-L-seryl-[protein] + ADP + H(+). The catalysed reaction is L-threonyl-[protein] + ATP = O-phospho-L-threonyl-[protein] + ADP + H(+). In terms of biological role, involved in gene regulation and confers tolerance to drought and osmotic stress. This chain is Serine/threonine-protein kinase SRK2C (SRK2C), found in Arabidopsis thaliana (Mouse-ear cress).